The sequence spans 201 residues: Putative ankyrin repeat protein YahD (201 aa).

6 ANK repeats span residues 5–34, 38–67, 71–100, 104–134, 138–172, and 176–201; these read NLPA…DINT, QGKT…DINK, TCLN…DLNC, FGGV…NVNQ, VGWT…SPHL, and YGKT…AAGA.

The polypeptide is Putative ankyrin repeat protein YahD (yahD) (Escherichia coli (strain K12)).